A 1295-amino-acid chain; its full sequence is DNA-directed RNA polymerase subunit beta' (1295 aa).

The Zn(2+) site is built by Cys-60, Cys-62, Cys-75, and Cys-78. Mg(2+) is bound by residues Asp-516, Asp-518, and Asp-520. Zn(2+) is bound by residues Cys-841, Cys-914, Cys-921, and Cys-924.

The protein belongs to the RNA polymerase beta' chain family. The RNAP catalytic core consists of 2 alpha, 1 beta, 1 beta' and 1 omega subunit. When a sigma factor is associated with the core the holoenzyme is formed, which can initiate transcription. Requires Mg(2+) as cofactor. It depends on Zn(2+) as a cofactor.

The enzyme catalyses RNA(n) + a ribonucleoside 5'-triphosphate = RNA(n+1) + diphosphate. In terms of biological role, DNA-dependent RNA polymerase catalyzes the transcription of DNA into RNA using the four ribonucleoside triphosphates as substrates. The polypeptide is DNA-directed RNA polymerase subunit beta' (Dehalococcoides mccartyi (strain ATCC BAA-2266 / KCTC 15142 / 195) (Dehalococcoides ethenogenes (strain 195))).